We begin with the raw amino-acid sequence, 431 residues long: Divergent protein kinase domain 1B (431 aa).

Residues 1-30 lie on the Cytoplasmic side of the membrane; the sequence is MRRLRRLVHLVLLCPFSKGLQGRLPGLRVK. Positions 5–6 match the May mediate ER retention motif; the sequence is RR. Residues 31–51 traverse the membrane as a helical segment; the sequence is YVLLVWLGIFVGSWMVYVHYS. Residues 52–431 are Lumenal-facing; sequence SYSELCRGHV…WREISNTNYS (380 aa). 2 cysteine pairs are disulfide-bonded: C57–C94 and C62–C117.

This sequence belongs to the DIPK family. Among the many cysteines in the lumenal domain, most are probably involved in disulfide bonds. Expressed in kidney, testis, lung, heart, stomach, intestine, pancreas, liver and salivary gland. Strongly expressed in acute pancreatitis, brain, and in peripheral endothelial cells.

The protein resides in the endoplasmic reticulum membrane. This Mus musculus (Mouse) protein is Divergent protein kinase domain 1B (Dipk1b).